A 941-amino-acid polypeptide reads, in one-letter code: Zinc finger protein su(Hw) (941 aa).

2 disordered regions span residues M1 to A97 and E176 to Q211. A compositionally biased stretch (low complexity) spans S47–S57. The span at V185–D202 shows a compositional bias: acidic residues. T186 bears the Phosphothreonine mark. The C2H2-type 1; atypical zinc-finger motif lies at H220 to C242. The C2H2-type 2 zinc-finger motif lies at I290–H313. The C2H2-type 3; atypical zinc finger occupies F319–H341. C2H2-type zinc fingers lie at residues Y348–H366, M380–H402, Y413–H435, F441–H463, Y469–H491, H497–H519, F523–H545, F553–H577, and T596–H619. The interaction with mod(mdg4) stretch occupies residues I760–L860. Residues D864 to A941 are disordered. 2 stretches are compositionally biased toward basic and acidic residues: residues G869–D880 and K891–A941.

Component of the gypsy chromatin insulator complex, composed of Cp190, mod(mdg4) and su(Hw). The gypsy chromatin insulator complex interacts with Topors via mod(mdg4) and su(Hw). Upon ecdysone stimulation, interacts with Nup98.

It localises to the nucleus. It is found in the chromosome. Its function is as follows. Component of the gypsy chromatin insulator complex which is required for the function of the gypsy chromatin insulator and other endogenous chromatin insulators. Chromatin insulators are regulatory elements which establish independent domains of transcriptional activity within eukaryotic genomes. Insulators have two defining properties; they can block the communication between an enhancer and a promoter when placed between them and can also buffer transgenes from position effect variegation (PEV). Insulators are proposed to structure the chromatin fiber into independent domains of differing transcriptional potential by promoting the formation of distinct chromatin loops. This chromatin looping may involve the formation of insulator bodies, where homotypic interactions between individual subunits of the insulator complex could promote the clustering of widely spaced insulators at the nuclear periphery. Within the gypsy insulator complex, this protein binds specifically to a region of the gypsy element located 3' of the 5' long terminal repeat (LTR), and may also mediate interaction with other endogenous insulators at sites distinct from those recognized by Cp190. Cooperates with pita and cliff to recruit Cp190 and regulate insulator function at the front-ultraabdominal (Fub) boundary. The sequence is that of Zinc finger protein su(Hw) from Drosophila melanogaster (Fruit fly).